A 71-amino-acid chain; its full sequence is Brevinin-1V (71 aa).

The signal sequence occupies residues 1–22; the sequence is MFTLKKSLLLLFFLGTINLSLC. A propeptide spanning residues 23–45 is cleaved from the precursor; it reads EQERDADEEERRDDSEERDIEVE. C65 and C71 are disulfide-bonded.

This sequence belongs to the frog skin active peptide (FSAP) family. Brevinin subfamily. In terms of tissue distribution, expressed by the skin glands.

The protein resides in the secreted. Its function is as follows. Has antimicrobial activity against Gram-positive bacteria and fungi but has weak or no activity against a range of Gram-negative bacteria except P.faecalis. Active against the Gram-positive bacteria E.faecium 091299 (MIC=37.5 uM), S.aureus ATCC 25923 (MIC=2.4 uM), S.carnosus KHS (MIC=19 uM), B.licheniformis X39 (MIC=2.4 uM) and R.rhodochrous X15 (MIC=1.2 uM) and a lower activity against E.faecalis 981 (MIC=75 uM). Active against the Gram-negative bacterium P.faecalis X29 (MIC=9.5 uM) is virtually inactive against E.coli ATCC 25922 (MIC=150 uM), and inactive against P.aeruginosa and S.typhi. Has antifungal activity against C.albicans ATCC 2002 (MIC=9.5 uM) and is also active against the slime mold 090223 (MIC=1.2 uM). Has low hemolytic activity against human erythrocytes (LC(50)=75 uM). This is Brevinin-1V from Odorrana hainanensis (Odor frog).